The sequence spans 256 residues: Thiazole synthase (256 aa).

The Schiff-base intermediate with DXP role is filled by Lys-95. 1-deoxy-D-xylulose 5-phosphate is bound by residues Gly-156, 182 to 183 (AG), and 204 to 205 (NT).

This sequence belongs to the ThiG family. In terms of assembly, homotetramer. Forms heterodimers with either ThiH or ThiS.

The protein localises to the cytoplasm. The catalysed reaction is [ThiS sulfur-carrier protein]-C-terminal-Gly-aminoethanethioate + 2-iminoacetate + 1-deoxy-D-xylulose 5-phosphate = [ThiS sulfur-carrier protein]-C-terminal Gly-Gly + 2-[(2R,5Z)-2-carboxy-4-methylthiazol-5(2H)-ylidene]ethyl phosphate + 2 H2O + H(+). The protein operates within cofactor biosynthesis; thiamine diphosphate biosynthesis. In terms of biological role, catalyzes the rearrangement of 1-deoxy-D-xylulose 5-phosphate (DXP) to produce the thiazole phosphate moiety of thiamine. Sulfur is provided by the thiocarboxylate moiety of the carrier protein ThiS. In vitro, sulfur can be provided by H(2)S. The polypeptide is Thiazole synthase (Escherichia coli O6:H1 (strain CFT073 / ATCC 700928 / UPEC)).